The following is a 328-amino-acid chain: Cytochrome c biogenesis protein CcsA (328 aa).

Helical transmembrane passes span 13-33 (ISFS…LVNL), 46-66 (GIII…IFSG), 73-93 (LYES…VSYF), 101-121 (LNAI…SGLL), 146-166 (MILG…LLVI), 234-254 (IISL…VWAN), 263-283 (WDPK…YLHI), and 295-315 (AIVA…VNLL).

The protein belongs to the CcmF/CycK/Ccl1/NrfE/CcsA family. In terms of assembly, may interact with Ccs1.

The protein localises to the plastid. It localises to the chloroplast thylakoid membrane. In terms of biological role, required during biogenesis of c-type cytochromes (cytochrome c6 and cytochrome f) at the step of heme attachment. The chain is Cytochrome c biogenesis protein CcsA from Olimarabidopsis pumila (Dwarf rocket).